We begin with the raw amino-acid sequence, 387 residues long: Chaperone protein DnaJ (387 aa).

Residues 6–70 enclose the J domain; the sequence is DYYETLGVSR…QKRAAYDQYG (65 aa). The segment at 143-225 adopts a CR-type zinc-finger fold; sequence GKDTKISYDR…CHGTGHEQER (83 aa). Residues C156, C159, C173, C176, C199, C202, C213, and C216 each coordinate Zn(2+). 4 CXXCXGXG motif repeats span residues 156 to 163, 173 to 180, 199 to 206, and 213 to 220; these read CHTCNGSG, CHKCHGSG, CDVCGGTG, and CPTCHGTG.

This sequence belongs to the DnaJ family. As to quaternary structure, homodimer. It depends on Zn(2+) as a cofactor.

The protein localises to the cytoplasm. Participates actively in the response to hyperosmotic and heat shock by preventing the aggregation of stress-denatured proteins and by disaggregating proteins, also in an autonomous, DnaK-independent fashion. Unfolded proteins bind initially to DnaJ; upon interaction with the DnaJ-bound protein, DnaK hydrolyzes its bound ATP, resulting in the formation of a stable complex. GrpE releases ADP from DnaK; ATP binding to DnaK triggers the release of the substrate protein, thus completing the reaction cycle. Several rounds of ATP-dependent interactions between DnaJ, DnaK and GrpE are required for fully efficient folding. Also involved, together with DnaK and GrpE, in the DNA replication of plasmids through activation of initiation proteins. This chain is Chaperone protein DnaJ, found in Lacticaseibacillus paracasei (strain ATCC 334 / BCRC 17002 / CCUG 31169 / CIP 107868 / KCTC 3260 / NRRL B-441) (Lactobacillus paracasei).